The primary structure comprises 83 residues: Sec-independent protein translocase protein TatA (83 aa).

Residues 1 to 21 traverse the membrane as a helical segment; sequence MGSLSPWHWAILAVVVIVLFG. The tract at residues 48 to 83 is disordered; sequence NENKAEASIETPTPVQSQRVDPSAASGQDSTEARPA. Residues 57 to 77 are compositionally biased toward polar residues; sequence ETPTPVQSQRVDPSAASGQDS.

The protein belongs to the TatA/E family. In terms of assembly, the Tat system comprises two distinct complexes: a TatABC complex, containing multiple copies of TatA, TatB and TatC subunits, and a separate TatA complex, containing only TatA subunits. Substrates initially bind to the TatABC complex, which probably triggers association of the separate TatA complex to form the active translocon.

It localises to the cell membrane. Its function is as follows. Part of the twin-arginine translocation (Tat) system that transports large folded proteins containing a characteristic twin-arginine motif in their signal peptide across membranes. TatA could form the protein-conducting channel of the Tat system. This is Sec-independent protein translocase protein TatA from Mycobacterium bovis (strain BCG / Pasteur 1173P2).